Reading from the N-terminus, the 74-residue chain is Lantibiotic lichenicidin A1 (74 aa).

Positions 1–42 (MSKKEMILSWKNPMYRTESSYHPAGNILKELQEEEQHSIAGG) are excised as a propeptide. Residue Thr-43 is modified to 2-oxobutanoic acid. Positions 45-49 (TLSTC) form a cross-link, beta-methyllanthionine (Thr-Cys). At Ser-47 the chain carries 2,3-didehydroalanine (Ser). Residue Thr-48 is modified to (Z)-2,3-didehydrobutyrine. A cross-link (lanthionine (Ser-Cys)) is located at residues 53–63 (SKPLGNNGYLC). 2 cross-links (beta-methyllanthionine (Thr-Cys)) span residues 64–69 (TVTKEC) and 66–73 (TKECMPSC).

Maturation of lantibiotics involves the enzymatic conversion of Thr, and Ser into dehydrated AA and the formation of thioether bonds with cysteine. This is followed by membrane translocation and cleavage of the modified precursor.

The protein resides in the secreted. It localises to the cell wall. Its function is as follows. Lanthionine-containing peptide antibiotic (lantibiotic) active on Gram-positive bacteria. The bactericidal activity of lantibiotics is based on depolarization of energized bacterial cytoplasmic membranes, initiated by the formation of aqueous transmembrane pores. When present individually, LchA1 exhibits activity towards L.lactis HP. When combined with LchA2, it displays activity towards a broad spectrum of non-pathogenic and pathogenic Gram-positive bacteria including strains of L.monocytogenes, methicillin-resistant S.aureus, S.pneumoniae and strains of vancomycin-resistant enterococci, but not towards E.faecium L4001 and BM4147-1. Combined LchA1 and LchA2 peptides also inhibit Bacillus sp. HIL-Y85/54728, L.lactis DPC3417 and B.halodurans C-125, which produce lantibiotics themselves. Inactivated by proteinase K and pronase E, but not by trypsin and chymotrypsin. The polypeptide is Lantibiotic lichenicidin A1 (Bacillus licheniformis (strain ATCC 14580 / DSM 13 / JCM 2505 / CCUG 7422 / NBRC 12200 / NCIMB 9375 / NCTC 10341 / NRRL NRS-1264 / Gibson 46)).